Reading from the N-terminus, the 142-residue chain is Group IIE secretory phospholipase A2 (142 aa).

Positions 1-19 (MKPPIALACLCLLVPLAGG) are cleaved as a signal peptide. Ca(2+)-binding residues include aspartate 41, glycine 43, tyrosine 45, glycine 47, and glycine 49. Cystine bridges form between cysteine 44–cysteine 135, cysteine 46–cysteine 62, cysteine 61–cysteine 115, cysteine 67–cysteine 142, cysteine 68–cysteine 108, cysteine 77–cysteine 101, and cysteine 95–cysteine 106. The active site involves histidine 65. Aspartate 66 provides a ligand contact to Ca(2+). Aspartate 109 is a catalytic residue. Ca(2+) contacts are provided by tyrosine 130 and asparagine 132.

This sequence belongs to the phospholipase A2 family. It depends on Ca(2+) as a cofactor. In terms of tissue distribution, highly expressed in skin and uterus, and at lower levels in various other tissues. Expressed in hair follicles, specifically localized in companion cells of the outer root sheath and cuticular cells of the inner root sheath in hair follicles during anagen. Expressed in white and brown adipose tissue.

Its subcellular location is the secreted. The protein resides in the cytoplasm. It catalyses the reaction a 1,2-diacyl-sn-glycero-3-phosphoethanolamine + H2O = a 1-acyl-sn-glycero-3-phosphoethanolamine + a fatty acid + H(+). It carries out the reaction 1-hexadecanoyl-2-(9Z-octadecenoyl)-sn-glycero-3-phosphoethanolamine + H2O = 1-hexadecanoyl-sn-glycero-3-phosphoethanolamine + (9Z)-octadecenoate + H(+). The catalysed reaction is 1-hexadecanoyl-2-(9Z,12Z-octadecadienoyl)-sn-glycero-3-phosphoethanolamine + H2O = 1-hexadecanoyl-sn-glycero-3-phosphoethanolamine + (9Z,12Z)-octadecadienoate + H(+). The enzyme catalyses 1-hexadecanoyl-2-(5Z,8Z,11Z,14Z-eicosatetraenoyl)-sn-glycero-3-phosphoethanolamine + H2O = 1-hexadecanoyl-sn-glycero-3-phosphoethanolamine + (5Z,8Z,11Z,14Z)-eicosatetraenoate + H(+). It catalyses the reaction 1,2-dihexadecanoyl-sn-glycero-3-phospho-(1'-sn-glycerol) + H2O = 1-hexadecanoyl-sn-glycero-3-phospho-(1'-sn-glycerol) + hexadecanoate + H(+). It carries out the reaction 1-hexadecanoyl-2-(9Z-octadecenoyl)-sn-glycero-3-phosphoglycerol + H2O = 1-hexadecanoyl-sn-glycero-3-phosphoglycerol + (9Z)-octadecenoate + H(+). The catalysed reaction is a 1,2-diacyl-sn-glycero-3-phosphocholine + H2O = a 1-acyl-sn-glycero-3-phosphocholine + a fatty acid + H(+). The enzyme catalyses 1,2-dihexadecanoyl-sn-glycero-3-phosphocholine + H2O = 1-hexadecanoyl-sn-glycero-3-phosphocholine + hexadecanoate + H(+). It catalyses the reaction 1-hexadecanoyl-2-(9Z-octadecenoyl)-sn-glycero-3-phosphocholine + H2O = 1-hexadecanoyl-sn-glycero-3-phosphocholine + (9Z)-octadecenoate + H(+). It carries out the reaction 1-hexadecanoyl-2-(9Z,12Z-octadecadienoyl)-sn-glycero-3-phosphocholine + H2O = (9Z,12Z)-octadecadienoate + 1-hexadecanoyl-sn-glycero-3-phosphocholine + H(+). The catalysed reaction is 1-hexadecanoyl-2-(4Z,7Z,10Z,13Z,16Z,19Z-docosahexaenoyl)-sn-glycero-3-phosphocholine + H2O = (4Z,7Z,10Z,13Z,16Z,19Z)-docosahexaenoate + 1-hexadecanoyl-sn-glycero-3-phosphocholine + H(+). In terms of biological role, secretory calcium-dependent phospholipase A2 that primarily targets extracellular phospholipids. Hydrolyzes the ester bond of the fatty acyl group attached at sn-2 position of phospholipids (phospholipase A2 activity), releasing various unsaturated fatty acids including oleoate, linoleoate, arachidonate, docosahexaenoate and lysophosphatidylethanolamines in preference to lysophosphatidylcholines. In response to high-fat diet, hydrolyzes minor lipoprotein phospholipids including phosphatidylserines, phosphatidylinositols and phosphatidylglycerols, altering lipoprotein composition and fat storage in adipose tissue and liver. May act in an autocrine and paracrine manner. Contributes to lipid remodeling of cellular membranes and generation of lipid mediators involved in pathogen clearance. Cleaves sn-2 fatty acyl chains of phosphatidylglycerols and phosphatidylethanolamines, which are major components of membrane phospholipids in bacteria. Acts as a hair follicle phospholipase A2. Selectively releases lysophosphatidylethanolamines (LPE) and various unsaturated fatty acids in skin to regulate hair follicle homeostasis. May regulate the inflammatory response by releasing arachidonate, a precursor of prostaglandins and leukotrienes. Upon allergen exposure, may participate in allergic inflammatory response by enhancing leukotriene C4 synthesis and degranulation in mast cells. This is Group IIE secretory phospholipase A2 (Pla2g2e) from Mus musculus (Mouse).